Consider the following 2813-residue polypeptide: von Willebrand factor (2813 aa).

The first 22 residues, 1–22, serve as a signal peptide directing secretion; the sequence is MIPARFAGVLLALALILPGTLC. A VWFD 1 domain is found at 33–201; the sequence is ARCSLFGSDF…ALSSGEQWCE (169 aa). Intrachain disulfides connect Cys35/Cys162 and Cys57/Cys200. N-linked (GlcNAc...) asparagine glycosylation is found at Asn99, Asn156, and Asn211. The TIL 1 domain occupies 295–348; it reads CPAGMEYRQCVSPCARTCQSLHINEMCQERCVDGCSCPEGQLLDEGLCVESTEC. The region spanning 386–560 is the VWFD 2 domain; sequence GECLVTGQSH…NAWKLHGDCQ (175 aa). Cystine bridges form between Cys388–Cys524, Cys410–Cys559, and Cys432–Cys440. TIL domains lie at 652–707 and 776–827; these read CPKG…KAQC and CPAD…LERC. Asn666 carries an N-linked (GlcNAc...) asparagine glycan. Residues 764-787 form an amino-terminal region; sequence SLSCRPPMVKLVCPADNLRAEGLE. Cystine bridges form between Cys767–Cys808, Cys776–Cys804, and Cys810–Cys821. Residues 788-833 are E1; it reads CTKTCQNYDLECMSMGCVSGCLCPPGMVRHENRCVALERCPCFHQG. Residues 826–853 form a CX region; the sequence is RCPCFHQGKEYAPGETVKIGCNTCVCQD. Residue Asn857 is glycosylated (N-linked (GlcNAc...) asparagine). One can recognise a VWFD 3 domain in the interval 865-1032; sequence ATCSTIGMAH…NSWKVSSQCA (168 aa). 8 disulfides stabilise this stretch: Cys867–Cys996, Cys889–Cys1031, Cys898–Cys993, Cys914–Cys921, Cys1060–Cys1084, Cys1071–Cys1111, Cys1089–Cys1091, and Cys1126–Cys1130. Residues 1146-1196 enclose the TIL 4 domain; sequence YNSCAPACQVTCQHPEPLACPVQCVEGCHAHCPPGKILDELLQTCVDPEDC. The N-linked (GlcNAc...) asparagine; atypical glycan is linked to Asn1147. 3 disulfide bridges follow: Cys1149-Cys1169, Cys1153-Cys1165, and Cys1196-Cys1199. The N-linked (GlcNAc...) asparagine glycan is linked to Asn1231. Cys1234 and Cys1237 are oxidised to a cystine. Residues Thr1248, Thr1255, and Thr1256 are each glycosylated (O-linked (GalNAc...) threonine). Ser1263 carries an O-linked (GalNAc...) serine glycan. Residues Cys1272 and Cys1458 are joined by a disulfide bond. The 177-residue stretch at 1277–1453 folds into the VWFA 1; binding site for platelet glycoprotein Ib domain; that stretch reads DLVFLLDGSS…DELEQQRDEI (177 aa). 2 O-linked (GalNAc...) threonine glycosylation sites follow: Thr1468 and Thr1477. Ser1486 carries O-linked (GalNAc...) serine glycosylation. A glycan (O-linked (GalNAc...) threonine) is linked at Thr1487. In terms of domain architecture, VWFA 2 spans 1498 to 1665; it reads DVAFVLEGSD…TLPREAPDLV (168 aa). An N-linked (GlcNAc...) (complex) asparagine glycan is attached at Asn1515. Asn1574 is a glycosylation site (N-linked (GlcNAc...) asparagine). A disulfide bridge connects residues Cys1669 and Cys1670. Thr1679 carries O-linked (GalNAc...) threonine glycosylation. 7 cysteine pairs are disulfide-bonded: Cys1686–Cys1872, Cys1879–Cys1904, Cys1899–Cys1940, Cys1927–Cys2088, Cys1950–Cys2085, Cys1972–Cys2123, and Cys1993–Cys2001. In terms of domain architecture, VWFA 3; main binding site for collagens type I and III spans 1691 to 1871; it reads DVILLLDGSS…TLGNSFLHKL (181 aa). In terms of domain architecture, VWFD 4 spans 1948-2124; the sequence is CVCTGSSTRH…TVQRPGQTCQ (177 aa). The interval 2216-2261 is E2; that stretch reads CPRHCDGNVSSCGDHPSEGCFCPPDKVMLEGSCVPEEACTQCIGED. N-linked (GlcNAc...) asparagine glycosylation is found at Asn2223 and Asn2290. The 74-residue stretch at 2255–2328 folds into the VWFC 1 domain; that stretch reads TQCIGEDGVQ…CCPEYECVCD (74 aa). Thr2298 is a glycosylation site (O-linked (GalNAc...) threonine). Asn2357 and Asn2400 each carry an N-linked (GlcNAc...) asparagine glycan. Positions 2429-2495 constitute a VWFC 2 domain; it reads KVCVHRSTIY…HEGECCGRCL (67 aa). The Cell attachment site motif lies at 2507 to 2509; that stretch reads RGD. N-linked (GlcNAc...) asparagine glycosylation is found at Asn2546 and Asn2585. The VWFC 3 domain maps to 2580–2645; it reads EACMLNGTVI…NTGECCGRCL (66 aa). Disulfide bonds link Cys2724/Cys2774, Cys2739/Cys2788, Cys2750/Cys2804, and Cys2754/Cys2806. A CTCK domain is found at 2724–2812; it reads CNDITARLQY…ECKCSPRKCS (89 aa). The N-linked (GlcNAc...) asparagine glycan is linked to Asn2790.

In terms of assembly, multimeric. Interacts with F8. All cysteine residues are involved in intrachain or interchain disulfide bonds. Post-translationally, N- and O-glycosylated. Plasma.

Its subcellular location is the secreted. The protein localises to the extracellular space. It is found in the extracellular matrix. In terms of biological role, important in the maintenance of hemostasis, it promotes adhesion of platelets to the sites of vascular injury by forming a molecular bridge between sub-endothelial collagen matrix and platelet-surface receptor complex GPIb-IX-V. Also acts as a chaperone for coagulation factor VIII, delivering it to the site of injury, stabilizing its heterodimeric structure and protecting it from premature clearance from plasma. In Homo sapiens (Human), this protein is von Willebrand factor (VWF).